The following is a 434-amino-acid chain: ATP-dependent RNA helicase uap56 (434 aa).

Residues 1-43 (MASAQEDLIDYEEEEELVQDQPAQEITPAADTAENGEKSDKKG) form a disordered region. Over residues 7–18 (DLIDYEEEEELV) the composition is skewed to acidic residues. The Q motif motif lies at 51 to 79 (TGFRDFLLKPELLRAITDSGFEHPSEVQQ). Positions 82 to 257 (IPQSILGTDV…KKFMQNPLEI (176 aa)) constitute a Helicase ATP-binding domain. 95–102 (AKSGMGKT) serves as a coordination point for ATP. A DECD box motif is present at residues 204-207 (DECD). Positions 269–430 (GLQQHYVKLE…ELPDEIDVGS (162 aa)) constitute a Helicase C-terminal domain.

It belongs to the DEAD box helicase family. DECD subfamily. Interacts with mlo3 and rae1.

It is found in the nucleus. It carries out the reaction ATP + H2O = ADP + phosphate + H(+). Its function is as follows. ATP-binding RNA helicase involved in transcription elongation and required for the export of mRNA out of the nucleus. SUB2 also plays a role in pre-mRNA splicing and spliceosome assembly. May be involved in rDNA and telomeric silencing, and maintenance of genome integrity. Links the mRNA adapter mlo3 to rae1 for targeting mRNA-protein complex to the proteins of the nucleoporin complex (NPC). The sequence is that of ATP-dependent RNA helicase uap56 (uap56) from Schizosaccharomyces pombe (strain 972 / ATCC 24843) (Fission yeast).